Reading from the N-terminus, the 132-residue chain is Group 2 truncated hemoglobin YjbI (132 aa).

Heme is bound by residues Thr45, Lys48, Tyr63, and His76.

Belongs to the truncated hemoglobin family. Group II subfamily. As to quaternary structure, monomer. It depends on heme as a cofactor.

Its function is as follows. Hemoglobin-like protein that exhibits a low peroxidase activity. Its very high oxygen affinity may rule out the possibility that it is involved in oxygen transport. This chain is Group 2 truncated hemoglobin YjbI (yjbI), found in Bacillus subtilis (strain 168).